We begin with the raw amino-acid sequence, 617 residues long: Phosphomethylpyrimidine synthase (617 aa).

Substrate-binding positions include N230, M259, Y288, H324, 344–346 (SRG), 385–388 (DGLR), and E424. H428 lines the Zn(2+) pocket. Y451 is a substrate binding site. H492 lines the Zn(2+) pocket. 3 residues coordinate [4Fe-4S] cluster: C572, C575, and C580.

This sequence belongs to the ThiC family. In terms of assembly, homodimer. It depends on [4Fe-4S] cluster as a cofactor.

It carries out the reaction 5-amino-1-(5-phospho-beta-D-ribosyl)imidazole + S-adenosyl-L-methionine = 4-amino-2-methyl-5-(phosphooxymethyl)pyrimidine + CO + 5'-deoxyadenosine + formate + L-methionine + 3 H(+). It participates in cofactor biosynthesis; thiamine diphosphate biosynthesis. In terms of biological role, catalyzes the synthesis of the hydroxymethylpyrimidine phosphate (HMP-P) moiety of thiamine from aminoimidazole ribotide (AIR) in a radical S-adenosyl-L-methionine (SAM)-dependent reaction. This is Phosphomethylpyrimidine synthase from Paracidovorax citrulli (strain AAC00-1) (Acidovorax citrulli).